The sequence spans 457 residues: ATP synthase subunit beta (457 aa).

Residue glycine 147 to threonine 154 participates in ATP binding.

The protein belongs to the ATPase alpha/beta chains family. In terms of assembly, F-type ATPases have 2 components, CF(1) - the catalytic core - and CF(0) - the membrane proton channel. CF(1) has five subunits: alpha(3), beta(3), gamma(1), delta(1), epsilon(1). CF(0) has three main subunits: a(1), b(2) and c(9-12). The alpha and beta chains form an alternating ring which encloses part of the gamma chain. CF(1) is attached to CF(0) by a central stalk formed by the gamma and epsilon chains, while a peripheral stalk is formed by the delta and b chains.

The protein localises to the cell inner membrane. It carries out the reaction ATP + H2O + 4 H(+)(in) = ADP + phosphate + 5 H(+)(out). Produces ATP from ADP in the presence of a proton gradient across the membrane. The catalytic sites are hosted primarily by the beta subunits. The chain is ATP synthase subunit beta from Haemophilus influenzae (strain PittGG).